The following is a 721-amino-acid chain: MIYEGKAITVKALESGIVELNFDLKGESVNKFNRLTLNELRQAVDAVKADASVKGVIVTSGKDVFIVGADITEFVDNFKLPEAELVAGNLEANRIFSDFEDLGVPTVVAINGIALGGGLEMCLAADYRVISSSARVGLPEVKLGLYPGFGGTVRLPRIIGADNAIEWIASGKENSAEDALKVGVVDAIVAPEKLQAAALDLIQRAISGEFDYKAKRQPKLDKLKLNAIEQMMAFETAKGFVAGQAGPNYPAPVEAIKTIQKAAIFGRDKALEIEAAGFVKMAKTSAAQSLIGLFLNDQELKKKAKGYDEVARDVKQAAVLGAGIMGGGIAYQSAVKGTPILMKDIREEAIQLGLNEASKLLGGRLEKGRLTAAKMAEALNAIRPTLSYGDFGNVDLVVEAVVENPKVKQAVLAEVEANVGENTILASNTSTISISLLAQALKRPENFVGMHFFNPVHMMPLVEVIRGEKSSEEAVATTVAYAKKMGKNPIVVNDCPGFLVNRVLFPYFGGFARLVSAGVDFVRIDKVMEKFGWPMGPAYLMDVVGIDTGHHGRDVMAEGFPDRMKDDRRSAVDALYEANRLGQKNGKGFYVYETDKKGKPKKVNDPAVLDVLKPIVYEQREVSDEDIINWMMIPLCLETVRCLEDGIVETAAEADMGLIYGIGFPPFRGGALRYIDSIGVAEFVALADRYAELGALYQPTAKLREMAANGQSFFGQASSEV.

The segment at 1–190 (MIYEGKAITV…KVGVVDAIVA (190 aa)) is enoyl-CoA hydratase/isomerase. Aspartate 297 contributes to the substrate binding site. The segment at 312-721 (RDVKQAAVLG…SFFGQASSEV (410 aa)) is 3-hydroxyacyl-CoA dehydrogenase. Residues methionine 325, aspartate 344, 401 to 403 (VVE), lysine 408, and serine 430 each bind NAD(+). Histidine 451 (for 3-hydroxyacyl-CoA dehydrogenase activity) is an active-site residue. NAD(+) is bound at residue asparagine 454. Residues asparagine 501 and tyrosine 660 each coordinate substrate.

It in the N-terminal section; belongs to the enoyl-CoA hydratase/isomerase family. In the C-terminal section; belongs to the 3-hydroxyacyl-CoA dehydrogenase family. In terms of assembly, heterotetramer of two alpha chains (FadB) and two beta chains (FadA).

It carries out the reaction a (3S)-3-hydroxyacyl-CoA + NAD(+) = a 3-oxoacyl-CoA + NADH + H(+). The enzyme catalyses a (3S)-3-hydroxyacyl-CoA = a (2E)-enoyl-CoA + H2O. It catalyses the reaction a 4-saturated-(3S)-3-hydroxyacyl-CoA = a (3E)-enoyl-CoA + H2O. The catalysed reaction is (3S)-3-hydroxybutanoyl-CoA = (3R)-3-hydroxybutanoyl-CoA. It carries out the reaction a (3Z)-enoyl-CoA = a 4-saturated (2E)-enoyl-CoA. The enzyme catalyses a (3E)-enoyl-CoA = a 4-saturated (2E)-enoyl-CoA. It functions in the pathway lipid metabolism; fatty acid beta-oxidation. Involved in the aerobic and anaerobic degradation of long-chain fatty acids via beta-oxidation cycle. Catalyzes the formation of 3-oxoacyl-CoA from enoyl-CoA via L-3-hydroxyacyl-CoA. It can also use D-3-hydroxyacyl-CoA and cis-3-enoyl-CoA as substrate. This is Fatty acid oxidation complex subunit alpha from Pseudomonas syringae pv. tomato (strain ATCC BAA-871 / DC3000).